The sequence spans 67 residues: Large ribosomal subunit protein bL35 (67 aa).

The segment covering Met-1–Val-16 has biased composition (basic residues). A disordered region spans residues Met-1–Arg-24.

It belongs to the bacterial ribosomal protein bL35 family.

The protein is Large ribosomal subunit protein bL35 of Delftia acidovorans (strain DSM 14801 / SPH-1).